Consider the following 391-residue polypeptide: Homocysteine-responsive endoplasmic reticulum-resident ubiquitin-like domain member 1 protein (391 aa).

Methionine 1 bears the N-acetylmethionine mark. At 1–263 the chain is on the cytoplasmic side; that stretch reads MEPEPQPEPV…VEEDDEINRD (263 aa). The Ubiquitin-like domain occupies 10–72; the sequence is VTLLVKSPNQ…LLDHQCLQDL (63 aa). The interval 90 to 126 is disordered; it reads NPSKMPETSTKGAESTEQPDNSNQTQHPGDSSSDGLR. Over residues 95–124 the composition is skewed to polar residues; it reads PETSTKGAESTEQPDNSNQTQHPGDSSSDG. The interval 115-200 is interaction with UBQLN1; it reads QHPGDSSSDG…ASGTFVPTPS (86 aa). Residue serine 135 is modified to Phosphoserine. The helical transmembrane segment at 264-284 threads the bilayer; the sequence is WLDWTYSAATFSVFLSILYFY. At 285 to 289 the chain is on the lumenal side; the sequence is SSLSR. Residues 290–310 form a helical membrane-spanning segment; that stretch reads FLMVMGATVVMYLHHVGWFPF. Residues 311-391 lie on the Cytoplasmic side of the membrane; it reads RQRPVQNFPD…LPEGPPALAN (81 aa). The segment at 317–361 is disordered; that stretch reads NFPDDGGPRDAANQDPNNNLQGGMDPEMEDPNRLPPDREVLDPEH. Over residues 346–361 the composition is skewed to basic and acidic residues; sequence DPNRLPPDREVLDPEH.

As to quaternary structure, interacts with PSEN1 and PSEN2. Interacts with UBXN6. Interacts with UBQLN1, UBQLN2 and UBQLN4. Component of the HRD1 complex, which comprises at least SYNV1/HRD1, FAM8A1, HERPUD1/HERP, OS9, SEL1L and UBE2J1. FAM8A1 binding to SYNV1 may promote recruitment of HERPUD1 to the HRD1 complex.

Its subcellular location is the endoplasmic reticulum membrane. Component of the endoplasmic reticulum quality control (ERQC) system also called ER-associated degradation (ERAD) involved in ubiquitin-dependent degradation of misfolded endoplasmic reticulum proteins. Binds to ubiquilins and this interaction is required for efficient degradation of CD3D via the ERAD pathway. The protein is Homocysteine-responsive endoplasmic reticulum-resident ubiquitin-like domain member 1 protein (Herpud1) of Mus musculus (Mouse).